A 535-amino-acid chain; its full sequence is Bifunctional purine biosynthesis protein PurH (535 aa).

An MGS-like domain is found at 6–151; sequence TRLPIRRALI…KNHKDVAIVV (146 aa).

It belongs to the PurH family.

The catalysed reaction is (6R)-10-formyltetrahydrofolate + 5-amino-1-(5-phospho-beta-D-ribosyl)imidazole-4-carboxamide = 5-formamido-1-(5-phospho-D-ribosyl)imidazole-4-carboxamide + (6S)-5,6,7,8-tetrahydrofolate. It carries out the reaction IMP + H2O = 5-formamido-1-(5-phospho-D-ribosyl)imidazole-4-carboxamide. The protein operates within purine metabolism; IMP biosynthesis via de novo pathway; 5-formamido-1-(5-phospho-D-ribosyl)imidazole-4-carboxamide from 5-amino-1-(5-phospho-D-ribosyl)imidazole-4-carboxamide (10-formyl THF route): step 1/1. It participates in purine metabolism; IMP biosynthesis via de novo pathway; IMP from 5-formamido-1-(5-phospho-D-ribosyl)imidazole-4-carboxamide: step 1/1. This Pseudomonas paraeruginosa (strain DSM 24068 / PA7) (Pseudomonas aeruginosa (strain PA7)) protein is Bifunctional purine biosynthesis protein PurH.